The following is a 615-amino-acid chain: Zinc metalloproteinase R519 (615 aa).

In terms of domain architecture, Peptidase M13 spans 1 to 611 (MTYRSCIPQN…LDPQLRSRIL (611 aa)). Histidine 454 is a Zn(2+) binding site. The active site involves glutamate 455. Zn(2+) contacts are provided by histidine 458 and glutamate 513. Aspartate 517 serves as the catalytic Proton donor.

Belongs to the peptidase M13 family. The cofactor is Zn(2+).

Functionally, zinc metalloprotease. This Acanthamoeba polyphaga (Amoeba) protein is Zinc metalloproteinase R519.